Here is a 125-residue protein sequence, read N- to C-terminus: MDNKMDLLSAYQRILSLSEQMLNLAKNEKWDELVDMEITYLKAVEVISHSSISSTTSLSLQQKMTNILQIILDNENEIKKLLQKRLDELSKLIKQASQQQLLNDSYGQFPVEPYHNTLMNSTEQK.

The tract at residues 1–50 is required for homodimerization; it reads MDNKMDLLSAYQRILSLSEQMLNLAKNEKWDELVDMEITYLKAVEVISHS. Positions 60-98 are fliD binding; that stretch reads LQQKMTNILQIILDNENEIKKLLQKRLDELSKLIKQASQ.

The protein belongs to the FliT family. As to quaternary structure, homodimer. Interacts with FliD and FlhC.

It is found in the cytoplasm. The protein localises to the cytosol. Functionally, dual-function protein that regulates the transcription of class 2 flagellar operons and that also acts as an export chaperone for the filament-capping protein FliD. As a transcriptional regulator, acts as an anti-FlhDC factor; it directly binds FlhC, thus inhibiting the binding of the FlhC/FlhD complex to class 2 promoters, resulting in decreased expression of class 2 flagellar operons. As a chaperone, effects FliD transition to the membrane by preventing its premature polymerization, and by directing it to the export apparatus. The sequence is that of Flagellar protein FliT from Photorhabdus laumondii subsp. laumondii (strain DSM 15139 / CIP 105565 / TT01) (Photorhabdus luminescens subsp. laumondii).